The primary structure comprises 237 residues: Putative N-acetylmannosamine-6-phosphate 2-epimerase (237 aa).

Belongs to the NanE family.

It catalyses the reaction an N-acyl-D-glucosamine 6-phosphate = an N-acyl-D-mannosamine 6-phosphate. Its pathway is amino-sugar metabolism; N-acetylneuraminate degradation; D-fructose 6-phosphate from N-acetylneuraminate: step 3/5. Functionally, converts N-acetylmannosamine-6-phosphate (ManNAc-6-P) to N-acetylglucosamine-6-phosphate (GlcNAc-6-P). The polypeptide is Putative N-acetylmannosamine-6-phosphate 2-epimerase (Listeria monocytogenes serotype 4a (strain HCC23)).